The chain runs to 285 residues: Nucleotide-binding protein FMG_1084 (285 aa).

ATP is bound at residue 8-15 (GMSGAGKS). GTP is bound at residue 59-62 (DIRG).

This sequence belongs to the RapZ-like family.

Its function is as follows. Displays ATPase and GTPase activities. The protein is Nucleotide-binding protein FMG_1084 of Finegoldia magna (strain ATCC 29328 / DSM 20472 / WAL 2508) (Peptostreptococcus magnus).